Consider the following 263-residue polypeptide: HTH-type transcriptional repressor NanR (263 aa).

The segment at 1 to 22 (MGLMNAFDSQTEDSSPAIGRNL) is disordered. In terms of domain architecture, HTH gntR-type spans 30–98 (KKLSEMVEEE…NGERARVSRP (69 aa)). The H-T-H motif DNA-binding region spans 58–77 (ERELMAFFNVGRPSVREALA).

It belongs to the NanR family.

Its function is as follows. Transcriptional repressor that controls expression of the genes required for the catabolism of sialic acids. The chain is HTH-type transcriptional repressor NanR from Shigella dysenteriae serotype 1 (strain Sd197).